The sequence spans 139 residues: Putative pre-16S rRNA nuclease (139 aa).

Belongs to the YqgF nuclease family.

The protein resides in the cytoplasm. Its function is as follows. Could be a nuclease involved in processing of the 5'-end of pre-16S rRNA. This is Putative pre-16S rRNA nuclease from Streptococcus pneumoniae serotype 19F (strain G54).